Reading from the N-terminus, the 378-residue chain is uncharacterized protein (378 aa).

The 110-residue stretch at 208–317 (GIGFADLSSF…NPVNLAARLV (110 aa)) folds into the Guanylate cyclase domain.

The protein belongs to the adenylyl cyclase class-4/guanylyl cyclase family.

This is an uncharacterized protein from Mycobacterium bovis (strain ATCC BAA-935 / AF2122/97).